The sequence spans 384 residues: S-adenosylmethionine synthase (384 aa).

Residue His15 participates in ATP binding. A Mg(2+)-binding site is contributed by Asp17. Glu43 contributes to the K(+) binding site. Residues Glu56 and Gln99 each coordinate L-methionine. The interval 99–109 (QSPDINQGVDR) is flexible loop. ATP is bound by residues 164–166 (DAK), 230–231 (RF), Asp239, 245–246 (RK), Ala262, and Lys266. Position 239 (Asp239) interacts with L-methionine. Lys270 lines the L-methionine pocket.

Belongs to the AdoMet synthase family. As to quaternary structure, homotetramer; dimer of dimers. The cofactor is Mg(2+). It depends on K(+) as a cofactor.

Its subcellular location is the cytoplasm. The catalysed reaction is L-methionine + ATP + H2O = S-adenosyl-L-methionine + phosphate + diphosphate. The protein operates within amino-acid biosynthesis; S-adenosyl-L-methionine biosynthesis; S-adenosyl-L-methionine from L-methionine: step 1/1. In terms of biological role, catalyzes the formation of S-adenosylmethionine (AdoMet) from methionine and ATP. The overall synthetic reaction is composed of two sequential steps, AdoMet formation and the subsequent tripolyphosphate hydrolysis which occurs prior to release of AdoMet from the enzyme. The chain is S-adenosylmethionine synthase from Proteus mirabilis (strain HI4320).